The following is a 229-amino-acid chain: Cytidylate kinase (229 aa).

10-18 (GYSSCGKST) is an ATP binding site.

The protein belongs to the cytidylate kinase family. Type 1 subfamily.

It is found in the cytoplasm. The enzyme catalyses CMP + ATP = CDP + ADP. It catalyses the reaction dCMP + ATP = dCDP + ADP. This is Cytidylate kinase from Phocaeicola vulgatus (strain ATCC 8482 / DSM 1447 / JCM 5826 / CCUG 4940 / NBRC 14291 / NCTC 11154) (Bacteroides vulgatus).